Reading from the N-terminus, the 385-residue chain is S-adenosylmethionine synthase (385 aa).

ATP is bound at residue histidine 16. Aspartate 18 is a Mg(2+) binding site. Position 44 (glutamate 44) interacts with K(+). Residues glutamate 57 and glutamine 100 each contribute to the L-methionine site. The segment at glutamine 100–lysine 110 is flexible loop. ATP-binding positions include aspartate 165 to lysine 167, arginine 231 to phenylalanine 232, aspartate 240, arginine 246 to lysine 247, alanine 263, and lysine 267. Aspartate 240 lines the L-methionine pocket. Lysine 271 lines the L-methionine pocket.

It belongs to the AdoMet synthase family. In terms of assembly, homotetramer; dimer of dimers. Mg(2+) is required as a cofactor. K(+) serves as cofactor.

The protein resides in the cytoplasm. It carries out the reaction L-methionine + ATP + H2O = S-adenosyl-L-methionine + phosphate + diphosphate. It participates in amino-acid biosynthesis; S-adenosyl-L-methionine biosynthesis; S-adenosyl-L-methionine from L-methionine: step 1/1. Functionally, catalyzes the formation of S-adenosylmethionine (AdoMet) from methionine and ATP. The overall synthetic reaction is composed of two sequential steps, AdoMet formation and the subsequent tripolyphosphate hydrolysis which occurs prior to release of AdoMet from the enzyme. This is S-adenosylmethionine synthase from Vibrio cholerae serotype O1 (strain ATCC 39315 / El Tor Inaba N16961).